Here is a 130-residue protein sequence, read N- to C-terminus: Small ribosomal subunit protein uS9 (130 aa).

The protein belongs to the universal ribosomal protein uS9 family.

The chain is Small ribosomal subunit protein uS9 from Chromobacterium violaceum (strain ATCC 12472 / DSM 30191 / JCM 1249 / CCUG 213 / NBRC 12614 / NCIMB 9131 / NCTC 9757 / MK).